Consider the following 184-residue polypeptide: tRNA (cytidine(56)-2'-O)-methyltransferase (184 aa).

Residues Leu-87, 112-116 (GAEKV), and 130-137 (VANQPHSE) contribute to the S-adenosyl-L-methionine site.

This sequence belongs to the aTrm56 family. In terms of assembly, homodimer.

Its subcellular location is the cytoplasm. It catalyses the reaction cytidine(56) in tRNA + S-adenosyl-L-methionine = 2'-O-methylcytidine(56) in tRNA + S-adenosyl-L-homocysteine + H(+). Specifically catalyzes the AdoMet-dependent 2'-O-ribose methylation of cytidine at position 56 in tRNAs. This is tRNA (cytidine(56)-2'-O)-methyltransferase from Methanocorpusculum labreanum (strain ATCC 43576 / DSM 4855 / Z).